The following is a 584-amino-acid chain: Arginine--tRNA ligase (584 aa).

Residues 126 to 136 carry the 'HIGH' region motif; the sequence is PNIAKEMHVGH.

It belongs to the class-I aminoacyl-tRNA synthetase family. In terms of assembly, monomer.

It localises to the cytoplasm. It catalyses the reaction tRNA(Arg) + L-arginine + ATP = L-arginyl-tRNA(Arg) + AMP + diphosphate. This is Arginine--tRNA ligase (argS) from Synechocystis sp. (strain ATCC 27184 / PCC 6803 / Kazusa).